We begin with the raw amino-acid sequence, 231 residues long: Putative 3-methyladenine DNA glycosylase (231 aa).

This sequence belongs to the DNA glycosylase MPG family.

The chain is Putative 3-methyladenine DNA glycosylase from Pseudomonas fluorescens (strain Pf0-1).